The primary structure comprises 354 residues: Histidinol-phosphate aminotransferase (354 aa).

A compositionally biased stretch (basic and acidic residues) spans 1–11 (MKSFLSDKAKS). Residues 1–33 (MKSFLSDKAKSIEPYTPGEQPKDKNYIKLNTNE) are disordered. Lysine 211 is subject to N6-(pyridoxal phosphate)lysine.

The protein belongs to the class-II pyridoxal-phosphate-dependent aminotransferase family. Histidinol-phosphate aminotransferase subfamily. In terms of assembly, homodimer. Pyridoxal 5'-phosphate is required as a cofactor.

The catalysed reaction is L-histidinol phosphate + 2-oxoglutarate = 3-(imidazol-4-yl)-2-oxopropyl phosphate + L-glutamate. It participates in amino-acid biosynthesis; L-histidine biosynthesis; L-histidine from 5-phospho-alpha-D-ribose 1-diphosphate: step 7/9. This chain is Histidinol-phosphate aminotransferase, found in Brachyspira hyodysenteriae (strain ATCC 49526 / WA1).